The following is a 546-amino-acid chain: Carboxypeptidase Y homolog A (546 aa).

Positions 1 to 17 (MKLLASTVLVGAAAASI) are cleaved as a signal peptide. Positions 18–132 (TPQQQVLQNP…KLEQYNLRAK (115 aa)) are excised as a propeptide. Intrachain disulfides connect C186/C426, C320/C334, C344/C367, C351/C360, and C389/C396. An N-linked (GlcNAc...) asparagine glycan is attached at N217. The active site involves S273. Residue D465 is part of the active site. N512 carries N-linked (GlcNAc...) asparagine glycosylation. The active site involves H523.

Belongs to the peptidase S10 family.

It localises to the vacuole. The enzyme catalyses Release of a C-terminal amino acid with broad specificity.. Functionally, vacuolar carboxypeptidase involved in degradation of small peptides. Digests preferentially peptides containing an aliphatic or hydrophobic residue in P1' position, as well as methionine, leucine or phenylalanine in P1 position of ester substrate. In Botryotinia fuckeliana (strain B05.10) (Noble rot fungus), this protein is Carboxypeptidase Y homolog A (CPYA).